The primary structure comprises 398 residues: Acetate kinase 1 (398 aa).

N9 is a binding site for Mg(2+). K16 contacts ATP. Residue R89 participates in substrate binding. The active-site Proton donor/acceptor is the D146. Residues 206-210, 281-283, and 329-333 contribute to the ATP site; these read HLGNG, DCR, and GIGEN. A Mg(2+)-binding site is contributed by E384.

This sequence belongs to the acetokinase family. In terms of assembly, homodimer. The cofactor is Mg(2+). It depends on Mn(2+) as a cofactor.

It is found in the cytoplasm. It carries out the reaction acetate + ATP = acetyl phosphate + ADP. It functions in the pathway metabolic intermediate biosynthesis; acetyl-CoA biosynthesis; acetyl-CoA from acetate: step 1/2. Its function is as follows. Catalyzes the formation of acetyl phosphate from acetate and ATP. Can also catalyze the reverse reaction. This Vibrio vulnificus (strain CMCP6) protein is Acetate kinase 1.